We begin with the raw amino-acid sequence, 304 residues long: Glycine--tRNA ligase alpha subunit (304 aa).

The protein belongs to the class-II aminoacyl-tRNA synthetase family. As to quaternary structure, tetramer of two alpha and two beta subunits.

Its subcellular location is the cytoplasm. The enzyme catalyses tRNA(Gly) + glycine + ATP = glycyl-tRNA(Gly) + AMP + diphosphate. The chain is Glycine--tRNA ligase alpha subunit from Vibrio atlanticus (strain LGP32) (Vibrio splendidus (strain Mel32)).